A 1264-amino-acid polypeptide reads, in one-letter code: BRCA2-interacting transcriptional repressor EMSY (1264 aa).

Positions 1–442 (MPVVWPTLLD…LPKPVTATLP (442 aa)) are interaction with BRCA2. One can recognise an ENT domain in the interval 16–114 (CKRILRKLEL…EWSIEGRRLV (99 aa)). Residues 118–122 (PRLVP) form an interaction with ZMYND11 region. The disordered stretch occupies residues 145 to 179 (PVPAETASKDGVSCSDEDEKPRKRRRTNSSSSSPV). A Phosphothreonine modification is found at Thr171. A phosphoserine mark is found at Ser173 and Ser177. 2 O-linked (GlcNAc) serine glycosylation sites follow: Ser192 and Ser200. A Phosphoserine modification is found at Ser202. Residue Thr235 is glycosylated (O-linked (GlcNAc) threonine). A compositionally biased stretch (low complexity) spans 364 to 406 (FPKQHQQSPKQQLQQVQQQTQQPVAQPSSVSQQQQPQQSALPP). The segment at 364 to 407 (FPKQHQQSPKQQLQQVQQQTQQPVAQPSSVSQQQQPQQSALPPG) is disordered. Thr465 and Thr470 each carry an O-linked (GlcNAc) threonine glycan. The O-linked (GlcNAc) serine glycan is linked to Ser521. The span at 660–671 (SRVADASNSSAQ) shows a compositional bias: polar residues. The segment at 660 to 700 (SRVADASNSSAQEGKEEPQGYTDSSSSSTESSQSSQDSQPV) is disordered. Positions 681–698 (TDSSSSSTESSQSSQDSQ) are enriched in low complexity. 2 positions are modified to phosphoserine: Ser782 and Ser785. Thr1069 carries an O-linked (GlcNAc) threonine glycan. At Ser1085 the chain carries Phosphoserine. The segment at 1232–1264 (QLDDDETAMEQDIDSSTEDGTEPSPSQSAVERS) is disordered. Over residues 1233 to 1252 (LDDDETAMEQDIDSSTEDGT) the composition is skewed to acidic residues. Residues 1254 to 1264 (PSPSQSAVERS) are compositionally biased toward polar residues.

In terms of assembly, homodimer. Interacts with the transactivation domain of BRCA2. Interacts with CBX1 (via chromoshadow domain). Interacts with ZMYND11. Does not interact with CBX3 or CBX5. Component of a nuclear receptor-mediated transcription complex composed of at least ZNF335, CCAR2 and EMSY; the complex stimulates the transcription of nuclear receptor target genes such as SOX9 and HOXA1. Within the complex interacts with CCAR2 and ZNF335. Components of this complex may associate with components of a histone methylation complex to form a complex at least composed of ZNF335, HCFC1, CCAR2, EMSY, MKI67, RBBP5, ASH2L and WDR5. Within this complex, interacts with ASH2L and RBBP5.

It localises to the nucleus. In terms of biological role, regulator which is able to repress transcription, possibly via its interaction with a multiprotein chromatin remodeling complex that modifies the chromatin. Its interaction with BRCA2 suggests that it may play a central role in the DNA repair function of BRCA2. Mediates ligand-dependent transcriptional activation by nuclear hormone receptors. This Mus musculus (Mouse) protein is BRCA2-interacting transcriptional repressor EMSY.